Here is a 158-residue protein sequence, read N- to C-terminus: Single-stranded DNA-binding protein 2 (158 aa).

An SSB domain is found at 1–107 (MNETIVCVVG…IDALAVGHDL (107 aa)). The disordered stretch occupies residues 109-158 (RGTSAFRRPSAKDGEAGVSPAARPEPNWETEPGSQPSVEHQPQPEPAGVT).

Homotetramer.

This Streptomyces avermitilis (strain ATCC 31267 / DSM 46492 / JCM 5070 / NBRC 14893 / NCIMB 12804 / NRRL 8165 / MA-4680) protein is Single-stranded DNA-binding protein 2 (ssb2).